We begin with the raw amino-acid sequence, 138 residues long: Large ribosomal subunit protein bL17 (138 aa).

The segment at 118 to 138 (RDEDAKGKDSGPSQDGAAEAA) is disordered.

Belongs to the bacterial ribosomal protein bL17 family. Part of the 50S ribosomal subunit. Contacts protein L32.

In Rhodopseudomonas palustris (strain HaA2), this protein is Large ribosomal subunit protein bL17.